A 938-amino-acid polypeptide reads, in one-letter code: LPS-assembly protein LptD (938 aa).

An N-terminal signal peptide occupies residues 1–33; that stretch reads MAVKHPAFRKKFPLLVTGSLLALQPAFSLQSFA. The interval 52–96 is disordered; sequence KTATSALPPRPQHSRSAVSTTSGSATATATKQEPAPVLVTESKGR. Residues 65–81 are compositionally biased toward low complexity; sequence SRSAVSTTSGSATATAT.

Belongs to the LptD family. Component of the lipopolysaccharide transport and assembly complex. Interacts with LptE and LptA.

The protein localises to the cell outer membrane. Its function is as follows. Together with LptE, is involved in the assembly of lipopolysaccharide (LPS) at the surface of the outer membrane. The polypeptide is LPS-assembly protein LptD (Ectopseudomonas mendocina (strain ymp) (Pseudomonas mendocina)).